Reading from the N-terminus, the 68-residue chain is DNA-directed RNA polymerase subunit Rpo10 (68 aa).

Zn(2+) contacts are provided by C7, C10, C44, and C45.

Belongs to the archaeal Rpo10/eukaryotic RPB10 RNA polymerase subunit family. As to quaternary structure, part of the RNA polymerase complex. It depends on Zn(2+) as a cofactor.

Its subcellular location is the cytoplasm. It catalyses the reaction RNA(n) + a ribonucleoside 5'-triphosphate = RNA(n+1) + diphosphate. Its function is as follows. DNA-dependent RNA polymerase (RNAP) catalyzes the transcription of DNA into RNA using the four ribonucleoside triphosphates as substrates. The sequence is that of DNA-directed RNA polymerase subunit Rpo10 from Methanococcus maripaludis (strain C5 / ATCC BAA-1333).